Reading from the N-terminus, the 160-residue chain is Variant surface antigen C (160 aa).

The signal sequence occupies residues 1–29 (MKKSIFSKKLLVSFGSLVALASIPLIAIS). Cysteine 30 is lipidated: N-palmitoyl cysteine. A lipid anchor (S-diacylglycerol cysteine) is attached at cysteine 30. The disordered stretch occupies residues 32–160 (QTNTDKSQQP…SSESGSQKTT (129 aa)). Composition is skewed to low complexity over residues 38–54 (SQQP…QSGT) and 62–87 (SGTS…QTET). 6 repeat units span residues 86 to 97 (ETAPKSPESGSQ), 98 to 109 (EATPKSPESGSQ), 110 to 121 (EATPKSPESGSQ), 122 to 133 (EAAPKSSESGSQ), 134 to 145 (EAAPKSSESGSQ), and 146 to 157 (EAAPKSSESGSQ). Positions 86-157 (ETAPKSPESG…APKSSESGSQ (72 aa)) are 6 X 12 AA tandem repeats. The segment covering 93-160 (ESGSQEATPK…SSESGSQKTT (68 aa)) has biased composition (polar residues).

It localises to the cell membrane. Functionally, responsible for the antigenic diversity for host adaptation. This is Variant surface antigen C (vlpC) from Mesomycoplasma hyorhinis (Mycoplasma hyorhinis).